Consider the following 600-residue polypeptide: Arginine--tRNA ligase (600 aa).

The short motif at 132–142 (ANPTGPLHVGH) is the 'HIGH' region element.

Belongs to the class-I aminoacyl-tRNA synthetase family. As to quaternary structure, monomer.

Its subcellular location is the cytoplasm. It catalyses the reaction tRNA(Arg) + L-arginine + ATP = L-arginyl-tRNA(Arg) + AMP + diphosphate. In Ralstonia nicotianae (strain ATCC BAA-1114 / GMI1000) (Ralstonia solanacearum), this protein is Arginine--tRNA ligase.